The primary structure comprises 266 residues: Small ribosomal subunit protein mS42 (266 aa).

The protein belongs to the mitochondrion-specific ribosomal protein mS42 family. In terms of assembly, component of the mitochondrial small ribosomal subunit (mt-SSU). Mature yeast 74S mitochondrial ribosomes consist of a small (37S) and a large (54S) subunit. The 37S small subunit contains a 15S ribosomal RNA (15S mt-rRNA) and 34 different proteins. The 54S large subunit contains a 21S rRNA (21S mt-rRNA) and 46 different proteins. mS42 forms a heterodimer with mS43, building a large protuberance adjacent to the mRNA channel exit in the mt-SSU body.

The protein localises to the mitochondrion. Its function is as follows. Component of the mitochondrial ribosome (mitoribosome), a dedicated translation machinery responsible for the synthesis of mitochondrial genome-encoded proteins, including at least some of the essential transmembrane subunits of the mitochondrial respiratory chain. The mitoribosomes are attached to the mitochondrial inner membrane and translation products are cotranslationally integrated into the membrane. The polypeptide is Small ribosomal subunit protein mS42 (RSM26) (Saccharomyces cerevisiae (strain ATCC 204508 / S288c) (Baker's yeast)).